The primary structure comprises 260 residues: UPF0294 protein YPO1077/y3099/YP_2772 (260 aa).

It belongs to the UPF0294 family.

The protein resides in the cytoplasm. The polypeptide is UPF0294 protein YPO1077/y3099/YP_2772 (Yersinia pestis).